The primary structure comprises 1726 residues: Merozoite surface protein 1 (1726 aa).

Residues 1–19 (MKIIFFLCSFLFFIINTQC) form the signal peptide. The segment covering 61-124 (KGASAQSGTS…SGTSGTSPSS (64 aa)) has biased composition (low complexity). A disordered region spans residues 61–149 (KGASAQSGTS…PPADASDSDA (89 aa)). The segment covering 125–134 (RSNTLPRSNT) has biased composition (polar residues). Asn133 carries an N-linked (GlcNAc...) asparagine glycan. A compositionally biased stretch (low complexity) spans 135-144 (SSGASPPADA). N-linked (GlcNAc...) asparagine glycosylation is found at Asn272, Asn501, Asn567, and Asn638. The segment at 735–771 (SETTEDGGHSTHTLSQSGETEVTEETEETEETVGHTT) is disordered. Over residues 755–765 (EVTEETEETEE) the composition is skewed to acidic residues. N-linked (GlcNAc...) asparagine glycosylation is found at Asn827, Asn924, Asn944, Asn990, Asn1016, Asn1114, and Asn1221. The segment covering 914–952 (TGTSSTSSPGNTTVNTAQSATHSNSQNQQSNASSTNTQN) has biased composition (low complexity). The interval 914–961 (TGTSSTSSPGNTTVNTAQSATHSNSQNQQSNASSTNTQNGVAVSSGPA) is disordered. Disordered stretches follow at residues 1254–1284 (VTPP…TQIP) and 1476–1497 (KEKF…DEQK). Polar residues predominate over residues 1270–1284 (VSGSSGSTKEETQIP). Residues 1481-1490 (SSPPTTPPSP) show a composition bias toward pro residues. Asn1613 is a glycosylation site (N-linked (GlcNAc...) asparagine). EGF-like domains follow at residues 1617–1657 (HQCV…VENP) and 1658–1705 (NPTC…IFCS). 6 cysteine pairs are disulfide-bonded: Cys1619-Cys1630, Cys1624-Cys1640, Cys1642-Cys1653, Cys1661-Cys1674, Cys1668-Cys1688, and Cys1690-Cys1704. Ser1705 is lipidated: GPI-anchor amidated serine. The propeptide at 1706–1726 (SSNFLGISFLLILMLILYSFI) is removed in mature form.

In terms of assembly, forms a complex composed of subunits p83, p30, p38, and p42 which remain non-covalently associated; the complex is formed at the merozoite surface prior to egress from host erythrocytes. Forms a complex composed of processed MSP1 subunits, MSP6 subunit p36 and MSP7; the complex is formed at the merozoite surface prior to egress from host erythrocytes. Within the complex, interacts (via subunit p38) with MSP6 subunit p36 and (via subunits p83, p30 and p38) with MSP7 (via subunit p22). Forms a complex composed of MSP1, MSP6, DBLMSP1 and DBLMSP2. Within the complex, interacts (via subunit p38) with DBLMSP1 and DBLMSP2. Forms a complex composed of MSP1, and rhoptry proteins RhopH3, RAP1 and CLAG9/RhopH3. Within the complex, interacts (via subunits p42 and p19) with RhopH3 (via C-terminus). Forms a complex composed of MSP1, MSP6, MSP7, MSP9 and MSP3; within the complex, MSP6 and MSP9 mediate the binding to the host erythrocyte. Interacts (via subunits p19 and p42) with MSP9; the interaction is direct; MSP1 subunits p19 or p42, and MSP9 form a co-ligand complex that interacts with host SLC4A1/Band 3 protein. May interact with PFD6. Interacts with host spectrin. Interacts with host glycophorin GYPA in a sialic acid-independent manner. As to quaternary structure, interacts with host proinflammatory cytokine S100P; the interaction blocks S100P inflammatory and chemotactic activities. In terms of assembly, interacts with host SLC4A1/Band 3 (via 5ABC region) on the host erythrocyte surface in a sialic acid-independent manner. In terms of processing, the p190 precursor is cleaved by SUB1 prior to merozoite egress into 4 subunits p83, p30, p38, and p42 which remain non-covalently associated. SUB1-mediated proteolytic cleavage occurs in an orderly manner; the first cleavage occurs at the p30/p38 site, followed by cleavage at the p83/p30 site, the last cleavage occurs at the p38/p42 site. The order of cleavage is essential for parasite viability. SUB1-mediated processing is essential for merozoite egress. In a second processing step during erythrocyte invasion, p42 is cleaved by SUB2 into p33 and p19; the latter remains attached to the merozoite surface via its GPI-anchor and is endocytosed during the subsequent ring stage.

The protein resides in the cell membrane. The protein localises to the secreted. It localises to the vacuole membrane. During the asexual blood stage, involved in merozoite egress from host erythrocytes possibly via its interaction with the host cytoskeleton protein spectrin resulting in the destabilization of the host cytoskeleton and thus leading to erythrocyte cell membrane rupture. Involved in the binding to host erythrocytes and is required for host erythrocyte invasion. Functionally, by binding to host proinflammatory cytokine S100P may interfere with host immune responses. Its function is as follows. Involved in merozoite invasion of host erythrocytes. May play a role in the biogenesis and/or function of the food vacuole during the intraerythrocytic development. The sequence is that of Merozoite surface protein 1 from Plasmodium falciparum (isolate Palo Alto / Uganda).